The sequence spans 145 residues: MNNNKVYSLNVVSFEKIIFNDFVKKIQVSGSEGELGIYPGHLQLLSLIKPGPLLILDDHDYQHVIYISGGIIEVQPTVVSILADTAIRGLDLDLNVVLDKKLKLENKISNVDCIDRNDVIQQLSCELAKLRVIEMFKNQYIKKNN.

Belongs to the ATPase epsilon chain family. As to quaternary structure, F-type ATPases have 2 components, CF(1) - the catalytic core - and CF(0) - the membrane proton channel. CF(1) has five subunits: alpha(3), beta(3), gamma(1), delta(1), epsilon(1). CF(0) has three main subunits: a, b and c.

The protein localises to the cell membrane. Produces ATP from ADP in the presence of a proton gradient across the membrane. The polypeptide is ATP synthase epsilon chain (Buchnera aphidicola subsp. Baizongia pistaciae (strain Bp)).